A 229-amino-acid polypeptide reads, in one-letter code: MRPFFCAAFGAPSCMRAANALSGGMDYPDLSLEEAAQARGYTRIAGVDEVGRGPLAGPVTAAAVVLDLADLPEGLNDSKKLTPRRRAALEPEIMARASYAVAHASVEEIDHHNILRASHLAMERAVAALDPQPDYLLIDGNLIPRALHIPAEAVVKGDGRSLSIAAASILAKEARDRIMVDLAQQFPGYGWERNAGYPSKQHRDALIKIGVTPHHRRSFKPVHKILYQE.

The region spanning threonine 42–glutamate 229 is the RNase H type-2 domain. The a divalent metal cation site is built by aspartate 48, glutamate 49, and aspartate 139.

The protein belongs to the RNase HII family. Requires Mn(2+) as cofactor. The cofactor is Mg(2+).

It localises to the cytoplasm. It catalyses the reaction Endonucleolytic cleavage to 5'-phosphomonoester.. In terms of biological role, endonuclease that specifically degrades the RNA of RNA-DNA hybrids. The sequence is that of Ribonuclease HII from Ruegeria sp. (strain TM1040) (Silicibacter sp.).